Reading from the N-terminus, the 780-residue chain is Kazrin (780 aa).

The stretch at 79-261 forms a coiled coil; the sequence is AQVLLREEVV…LATLTKDVPK (183 aa). A disordered region spans residues 295 to 430; the sequence is QQTLYHSHPP…TRHSLSLSEG (136 aa). Ser-357, Ser-372, and Ser-392 each carry phosphoserine. The span at 416-427 shows a compositional bias: polar residues; sequence SQCSPTRHSLSL. 3 SAM domains span residues 451–516, 529–593, and 617–684; these read WKAG…YRDA, DHHW…LYQV, and WTNQ…STVF. Residues 692-780 form a disordered region; sequence IRESERFGTP…EYSSLEVTNV (89 aa). The span at 760-771 shows a compositional bias: basic and acidic residues; the sequence is LQGRPEQCRLEE.

This sequence belongs to the kazrin family.

The protein localises to the cell junction. The protein resides in the nucleus. It localises to the cytoplasm. Its subcellular location is the cytoskeleton. In terms of biological role, component of the cornified envelope of keratinocytes. May be involved in the interplay between adherens junctions and desmosomes. The function in the nucleus is not known. The sequence is that of Kazrin (Kazn) from Rattus norvegicus (Rat).